A 56-amino-acid polypeptide reads, in one-letter code: Large ribosomal subunit protein eL40 (56 aa).

Belongs to the eukaryotic ribosomal protein eL40 family.

The protein is Large ribosomal subunit protein eL40 of Saccharolobus islandicus (strain Y.N.15.51 / Yellowstone #2) (Sulfolobus islandicus).